The primary structure comprises 569 residues: Peroxynitrite isomerase THAP4 (569 aa).

Residues 1-85 (MVICCAAVNC…LKPTAVPSIF (85 aa)) form a THAP-type zinc finger. The interval 88 to 216 (SEKKRGAGGH…DKSGISMDDF (129 aa)) is disordered. Composition is skewed to polar residues over residues 121-130 (IGSSLSSSDN) and 157-167 (AVSQEQGQSLE). Residue Ser-159 is modified to Phosphoserine. Positions 230 to 233 (LHSY) match the HCFC1-binding motif (HBM) motif. Ser-234 bears the Phosphoserine mark. Residues 235–312 (FSSKHTRERP…EAVQSEHSDA (78 aa)) are disordered. The span at 242-262 (ERPSVPREPMDRKRLKREMEP) shows a compositional bias: basic and acidic residues. Residues 265-279 (SGNSVAQSPPSSSLT) show a composition bias toward polar residues. Residues 280–289 (ATPQKASQSP) show a composition bias toward low complexity. The segment at 407–569 (PPKLNPVVEP…LHITYKKVTP (163 aa)) is nitrobindin. Positions 436 and 559 each coordinate heme b.

In the C-terminal section; belongs to the nitrobindin family. Homodimer. Heme b serves as cofactor.

Its subcellular location is the cytoplasm. The protein localises to the nucleus. The enzyme catalyses peroxynitrite = nitrate. It participates in nitrogen metabolism. In terms of biological role, heme-binding protein able to scavenge peroxynitrite and to protect free L-tyrosine against peroxynitrite-mediated nitration, by acting as a peroxynitrite isomerase that converts peroxynitrite to nitrate. Therefore, this protein likely plays a role in peroxynitrite sensing and in the detoxification of reactive nitrogen and oxygen species (RNS and ROS, respectively). Is able to bind nitric oxide (NO) in vitro, but may act as a sensor of peroxynitrite levels in vivo, possibly modulating the transcriptional activity residing in the N-terminal region. This is Peroxynitrite isomerase THAP4 from Mus musculus (Mouse).